The chain runs to 174 residues: Anthrone oxygenase CPUR_05435 (174 aa).

Transmembrane regions (helical) follow at residues 13 to 33, 56 to 76, 88 to 108, and 140 to 160; these read VALA…AIMI, YGSV…GFAS, CLAA…AMIP, and WVVL…MGFT.

It belongs to the anthrone oxygenase family.

Its subcellular location is the membrane. It catalyses the reaction emodin anthrone + O2 = emodin + H2O + H(+). Anthrone oxygenase; part of the ergochrome gene cluster responsible for the typical purple-black color of the ergot sclerotia. The ergochrome gene cluster produces several ergot pigments including the yellow ergochrome secalonic acid and its derivatives, as well as the red anthraquinones endocrocin and clavorubin. The pathway begins with the synthesis of atrochrysone thioester by the polyketide synthase (PKS) CPUR_05437. The atrochrysone carboxyl ACP thioesterase CPUR_05436 then breaks the thioester bond and releases the atrochrysone carboxylic acid from CPUR_05437. The decarboxylase CPUR_05434 then catalyzes the concerted decarboxylation-elimination required to convert atochrysone carboxylic acid into emodin anthrone, which is further oxidized to emodin by the anthrone oxygenase CPUR_05435. Emodin is further modified to yield monodictyphenone via several steps involving CPUR_05427, CPUR_05428, CPUR_05429 and CPUR_05430. The short chain dehydrogenase/reductase CPUR_05418 then catalyzes the C-5 ketoreduction to give the xanthone skeleton of the monomeric units. Ergochromes formation requires further dimerization steps of different xanthone units, probably catalyzed by the cytochrome P450 monooxygenase CPUR_05419. CPUR_05425, CPUR_05426 and CPUR_05431 are unique to Claviceps, thus it is likely that they are involved in further modification of xanthone units or in their dimerization. The yellow ergochromes and the red anthraquinone pigments endocrocin and clavorubin are products from the same PKS derived precursors and the latter are likely shunt products in the pathway of xanthone biosynthesis. It is proposed that atrochrysone carboxylic acid released from the PKS CPUR_05437 can also be converted to endocrocin anthrone which is further oxidized into endocrocin by CPUR_05435. Endocrocin could be then modified to clavorubin, possibly by CPUR_05423 and CPUR_05431. Clavorubin is the principal anthraquinone metabolite produced by the cluster with a much higher yield compared to endocrocin. This Claviceps purpurea (strain 20.1) (Ergot fungus) protein is Anthrone oxygenase CPUR_05435.